The chain runs to 449 residues: Ras-related GTP-binding protein D (449 aa).

Positions 1-55 (MSQVLGKPQPQGEDGGEDQEEDELVGLAGYEDGPESSDAELDSGPEEGESRRNSW) are disordered. 2 stretches are compositionally biased toward acidic residues: residues 14 to 24 (DGGEDQEEDEL) and 32 to 47 (DGPE…GPEE). GTP-binding residues include arginine 120, arginine 121, serine 122, glycine 123, lysine 124, serine 125, serine 126, and threonine 140. Positions 121, 122, 123, 124, 125, 126, 140, 144, and 146 each coordinate GDP. GTP is bound by residues threonine 146, glycine 169, histidine 228, lysine 229, and aspartate 231. 5 residues coordinate GDP: histidine 228, lysine 229, aspartate 231, serine 269, and isoleucine 270. Isoleucine 270 contributes to the GTP binding site. The segment at 428–449 (KAQSRLPKKTGATPNGTPRVLL) is disordered.

The protein belongs to the GTR/RAG GTP-binding protein family. Forms a heterodimer with RRAGA in a sequence-independent manner and RRAGB. Heterodimerization stabilizes RRAG proteins. The GDP-bound form of RRAGD (in complex with the GTP-bound form of RRAGA or RRAGB), interacts with RPTOR, thereby promoting recruitment of mTORC1 to the lysosomes. Component of the lysosomal folliculin complex (LFC), composed of FLCN, FNIP1 (or FNIP2), RagA/RRAGA or RagB/RRAGB GDP-bound, RagC/RRAGC or RagD/RRAGD GTP-bound, and Ragulator. Interacts with NOL8. Interacts with SH3BP4; the interaction with this negative regulator is most probably direct, preferentially occurs with the inactive GDP-bound form of RRAGD and is negatively regulated by amino acids. The Rag heterodimer interacts with SLC38A9; the probable amino acid sensor. Interacts with SESN1, SESN2 and SESN3. The GDP-bound form interacts with TFEB. The GDP-bound form interacts with TFE3. As to expression, expressed in the distal tubule of the kidney.

The protein resides in the cytoplasm. The protein localises to the nucleus. It is found in the lysosome membrane. The enzyme catalyses GTP + H2O = GDP + phosphate + H(+). The activation of RagD/RRAGD is mediated by a GTPase activating protein (GAP). In high-amino acid conditions, activated by GTPase activating protein FLCN that stimulates RRAGD GTPase activity to turn it into its active GDP-bound form. In response to amino acid depletion, the GATOR1 complex inactivates RagC/RRAGC by securing the GTP-bound inactive form. Its function is as follows. Guanine nucleotide-binding protein that plays a crucial role in the cellular response to amino acid availability through regulation of the mTORC1 signaling cascade. Forms heterodimeric Rag complexes with RagA/RRAGA or RagB/RRAGB and cycles between an inactive GTP-bound and an active GDP-bound form: RagD/RRAGD is in its active form when GDP-bound RagD/RRAGD forms a complex with GTP-bound RagA/RRAGA (or RagB/RRAGB) and in an inactive form when GTP-bound RagD/RRAGD heterodimerizes with GDP-bound RagA/RRAGA (or RagB/RRAGB). In its active form, promotes the recruitment of mTORC1 to the lysosomes and its subsequent activation by the GTPase RHEB. This is a crucial step in the activation of the MTOR signaling cascade by amino acids. Also plays a central role in the non-canonical mTORC1 complex, which acts independently of RHEB and specifically mediates phosphorylation of MiT/TFE factors TFEB and TFE3: GDP-bound RagD/RRAGD mediates recruitment of MiT/TFE factors TFEB and TFE3. The protein is Ras-related GTP-binding protein D of Mus musculus (Mouse).